Here is a 171-residue protein sequence, read N- to C-terminus: Shikimate kinase (171 aa).

Residue 14 to 19 participates in ATP binding; it reads GAGKST. S18 serves as a coordination point for Mg(2+). Substrate-binding residues include D36, R60, and G82. R120 serves as a coordination point for ATP. R139 is a binding site for substrate. Position 156 (Q156) interacts with ATP.

It belongs to the shikimate kinase family. In terms of assembly, monomer. Mg(2+) is required as a cofactor.

Its subcellular location is the cytoplasm. It carries out the reaction shikimate + ATP = 3-phosphoshikimate + ADP + H(+). It participates in metabolic intermediate biosynthesis; chorismate biosynthesis; chorismate from D-erythrose 4-phosphate and phosphoenolpyruvate: step 5/7. Catalyzes the specific phosphorylation of the 3-hydroxyl group of shikimic acid using ATP as a cosubstrate. The protein is Shikimate kinase of Shewanella sp. (strain MR-4).